Here is a 552-residue protein sequence, read N- to C-terminus: Urocanate hydratase (552 aa).

NAD(+) contacts are provided by residues 49–50 (GG), glutamine 127, 173–175 (GMG), aspartate 193, 239–240 (NA), 260–264 (QTSAH), 270–271 (YI), and tyrosine 319. Cysteine 407 is a catalytic residue. Glycine 489 contributes to the NAD(+) binding site.

This sequence belongs to the urocanase family. Requires NAD(+) as cofactor.

The protein resides in the cytoplasm. The catalysed reaction is 4-imidazolone-5-propanoate = trans-urocanate + H2O. Its pathway is amino-acid degradation; L-histidine degradation into L-glutamate; N-formimidoyl-L-glutamate from L-histidine: step 2/3. Catalyzes the conversion of urocanate to 4-imidazolone-5-propionate. The protein is Urocanate hydratase of Bacillus cereus (strain ATCC 10987 / NRS 248).